A 51-amino-acid chain; its full sequence is MFKKVGKFLAALAAILTLAYILAVYPQVALVVVGACYLAAVCACVWSIVNW.

The N-terminal stretch at 1–23 is a signal peptide; sequence MFKKVGKFLAALAAILTLAYILA. A helical membrane pass occupies residues 28–48; that stretch reads VALVVVGACYLAAVCACVWSI.

It is found in the host membrane. This is Protein 1.4 from Escherichia coli (Bacteriophage T7).